A 171-amino-acid polypeptide reads, in one-letter code: Mitochondrial import inner membrane translocase subunit Tim17-A (171 aa).

Cysteine 9 and cysteine 78 are disulfide-bonded. Helical transmembrane passes span 17–37, 63–77, and 113–133; these read CGGA…FKGF, GGSF…STID, and VGSA…GILL. Positions 144–171 are disordered; sequence GPQFTEDHSQLPSSQLPSSPFGDYRQYQ. Residues 153–163 show a composition bias toward low complexity; the sequence is QLPSSQLPSSP.

This sequence belongs to the Tim17/Tim22/Tim23 family. In terms of assembly, component of the TIM23 complex at least composed of TIMM23, TIMM17 (TIMM17A or TIMM17B) and TIMM50. The complex interacts with the TIMM44 component of the PAM complex and with DNAJC15. In terms of processing, degraded by YMEL1 downstream of the integrated stress response (ISR).

It is found in the mitochondrion inner membrane. Functionally, essential component of the TIM23 complex, a complex that mediates the translocation of transit peptide-containing proteins across the mitochondrial inner membrane. The polypeptide is Mitochondrial import inner membrane translocase subunit Tim17-A (Timm17a) (Mus musculus (Mouse)).